The chain runs to 129 residues: Prefoldin subunit alpha (129 aa).

The protein belongs to the prefoldin alpha subunit family. As to quaternary structure, heterohexamer of two alpha and four beta subunits.

It localises to the cytoplasm. Its function is as follows. Molecular chaperone capable of stabilizing a range of proteins. Seems to fulfill an ATP-independent, HSP70-like function in archaeal de novo protein folding. This chain is Prefoldin subunit alpha, found in Thermofilum pendens (strain DSM 2475 / Hrk 5).